We begin with the raw amino-acid sequence, 498 residues long: MGGYVLAIDQGTTSTRAIVFDGNMKVAGVGQKEFTQHYPKPGWVEHDPEEIWASVLFTVGKAITAAGITAKDIAAVGITNQRETVVVWDRETGKPIHNAIVWQDRRTASYCDKLKRQDLEKLFTRRTGLLLDPYFSGTKLSWMLANVKGARARAAKGELCFGTIDTFLIWRLTGGKSFVTDATNASRTLMYNIASNAWDEDLLEILRVPAAMLPEVKDCAADFGITDASLFGATIPILGVAGDQQAATIGQACFERGMMKSTYGTGCFALLNTGTDIVRSKNRLLTTIAYRLDGETTYALEGSIFIAGAAVQWLRDGLKAIKSAADSGALAEKADPLQEVYLVPAFTGLGAPHWDPDARGAIFGLTRNTGPEEIVRAALEAVCYQSRDLLDAMHKDWRNGNGKETVLRVDGGMVASDWTMQRLADLLDAPVDRPTILETTALGAAWLAGSRAGVWPDREGFAKAWARDRRFEPAMDEKTRSGKLKGWKDAVRRTLSAG.

Threonine 12 contacts ADP. The ATP site is built by threonine 12, threonine 13, and serine 14. Sn-glycerol 3-phosphate is bound at residue threonine 12. Position 16 (arginine 16) interacts with ADP. 4 residues coordinate sn-glycerol 3-phosphate: arginine 82, glutamate 83, tyrosine 134, and aspartate 243. Glycerol is bound by residues arginine 82, glutamate 83, tyrosine 134, aspartate 243, and glutamine 244. 2 residues coordinate ADP: threonine 265 and glycine 308. Positions 265, 308, 312, and 412 each coordinate ATP. Residue glycine 412 participates in ADP binding.

Belongs to the FGGY kinase family.

It carries out the reaction glycerol + ATP = sn-glycerol 3-phosphate + ADP + H(+). The protein operates within polyol metabolism; glycerol degradation via glycerol kinase pathway; sn-glycerol 3-phosphate from glycerol: step 1/1. Its activity is regulated as follows. Inhibited by fructose 1,6-bisphosphate (FBP). Functionally, key enzyme in the regulation of glycerol uptake and metabolism. Catalyzes the phosphorylation of glycerol to yield sn-glycerol 3-phosphate. The protein is Glycerol kinase of Rhizobium rhizogenes (strain K84 / ATCC BAA-868) (Agrobacterium radiobacter).